The following is a 58-amino-acid chain: T-cell receptor gamma alternate reading frame protein (58 aa).

As to expression, detected at low levels in the ductal cells of the salivary gland but not in the acinar cells (at protein level). Expressed in endometrium (at protein level). Expressed in epithelial cells within the acinar ducts of the prostate.

The polypeptide is T-cell receptor gamma alternate reading frame protein (Homo sapiens (Human)).